Consider the following 416-residue polypeptide: Serine protease inhibitor A3K (416 aa).

The signal sequence occupies residues 1–20 (MAFIAALGLLMAGICPAVLC). Asparagine 102, asparagine 182, asparagine 220, and asparagine 267 each carry an N-linked (GlcNAc...) asparagine glycan. An RCL region spans residues 365–392 (GTEGAAATAVTAALKSLPQTIPLLNFNR).

The protein belongs to the serpin family. N-glycosylated. As to expression, liver and plasma.

The protein resides in the secreted. In terms of biological role, binds to and inhibits kallikreins. Inhibits trypsin but not chymotrypsin or elastase. The sequence is that of Serine protease inhibitor A3K (Serpina3k) from Rattus norvegicus (Rat).